Here is a 1617-residue protein sequence, read N- to C-terminus: Mitogen-activated protein kinase kinae kinase bck1 (1617 aa).

9 disordered regions span residues 1–73 (MDGQ…SQLQ), 167–199 (GPVH…RTMP), 211–253 (SVAS…GGMS), 345–399 (RQIH…SPNL), 455–555 (DHRR…SSSY), 568–633 (KRSK…LRGK), 739–820 (GVPL…ISPE), 832–1144 (EHKR…RGDI), and 1165–1277 (IDLD…EILR). Residues 19–28 (TQPSQSHMLS) are compositionally biased toward low complexity. Over residues 44 to 60 (VMPPPPPGPPPGPPPGP) the composition is skewed to pro residues. Polar residues predominate over residues 220 to 248 (TAQNHQSQTGQTNEPTKSPSHRQNNSNTL). Positions 482-504 (KSGSPATQHATLNQGLSSSSTGD) are enriched in polar residues. Positions 524-533 (RYYESRKGQE) are enriched in basic and acidic residues. Composition is skewed to polar residues over residues 535–555 (IRPS…SSSY) and 586–596 (ESPTSPVNLRQ). Composition is skewed to basic and acidic residues over residues 832 to 841 (EHKREVERKQ) and 871 to 885 (FDER…KKAD). Composition is skewed to polar residues over residues 897 to 907 (PQESYTLTRIN) and 956 to 980 (GGKQ…PQSS). 2 stretches are compositionally biased toward basic and acidic residues: residues 1128-1140 (EDER…DSFA) and 1189-1198 (PENDLHKKEN). 2 stretches are compositionally biased toward polar residues: residues 1199 to 1208 (QPSSSYTGEM) and 1257 to 1272 (NQAS…NQKS). Positions 1323 to 1596 (IIRGQLIGKG…QTLLTRHPFC (274 aa)) constitute a Protein kinase domain. Residues 1329 to 1337 (IGKGTYGRV) and Lys-1352 each bind ATP.

The protein belongs to the protein kinase superfamily. STE Ser/Thr protein kinase family. MAP kinase kinase kinase subfamily.

The catalysed reaction is L-seryl-[protein] + ATP = O-phospho-L-seryl-[protein] + ADP + H(+). It carries out the reaction L-threonyl-[protein] + ATP = O-phospho-L-threonyl-[protein] + ADP + H(+). Functionally, mitogen-activated protein kinase kinase kinase; part of cell wall integrity (CWI) signaling pathway composed of pkcA, the bck1-mkk2-mpka MAPK cascade and the downstream rlmA transcription regulator. The CWI signaling pathway regulates cell wall integrity and pyomelanin formation. CWI also controls oxidative stress response, gliotoxin production, iron adaptation and asexual development. Finally, CWI is constitutively required for A.fumigatus to cope with the temperature increase found in the mammalian lung environment, during infection. This is Mitogen-activated protein kinase kinae kinase bck1 from Aspergillus fumigatus (strain ATCC MYA-4609 / CBS 101355 / FGSC A1100 / Af293) (Neosartorya fumigata).